Reading from the N-terminus, the 177-residue chain is Adenine phosphoribosyltransferase (177 aa).

The protein belongs to the purine/pyrimidine phosphoribosyltransferase family. As to quaternary structure, homodimer.

Its subcellular location is the cytoplasm. It carries out the reaction AMP + diphosphate = 5-phospho-alpha-D-ribose 1-diphosphate + adenine. It participates in purine metabolism; AMP biosynthesis via salvage pathway; AMP from adenine: step 1/1. In terms of biological role, catalyzes a salvage reaction resulting in the formation of AMP, that is energically less costly than de novo synthesis. The protein is Adenine phosphoribosyltransferase of Chlorobaculum parvum (strain DSM 263 / NCIMB 8327) (Chlorobium vibrioforme subsp. thiosulfatophilum).